The sequence spans 377 residues: Gap junction gamma-1 protein (377 aa).

Over 1-18 (MSWSFLTRLLEEINNHST) the chain is Cytoplasmic. The chain crosses the membrane as a helical span at residues 19–39 (FVGKIWLTVLIIFRIVLTAVG). The Extracellular portion of the chain corresponds to 40–75 (GESIYYDEQSKFTCNTHQPGCENVCYDAFAPLSHVR). A helical membrane pass occupies residues 76 to 96 (FWVFQIILITTPSIMYLGFAM). Topologically, residues 97-174 (HRIARQPDEQ…RRIKQDGLMK (78 aa)) are cytoplasmic. Positions 129-163 (DYEEAEDNQEEDPMICEEEEPEKDSEKGDKKKHDG) are disordered. A compositionally biased stretch (acidic residues) spans 131-151 (EEAEDNQEEDPMICEEEEPEK). A helical membrane pass occupies residues 175–197 (VYVLQLLFRSVFEVGFLMGQYVL). Residues 198–228 (YGFEVIPFFVCSRNPCPHTVDCFVSRPTEKT) are Extracellular-facing. Residues 229 to 249 (IFLLIMYAVSALCLFLNLCEL) form a helical membrane-spanning segment. Topologically, residues 250–377 (FHLGIGGIRD…GVGSREKSGL (128 aa)) are cytoplasmic. Disordered stretches follow at residues 266–286 (KEIQESRKKKPSAPPNYHSVL) and 341–377 (AHASRSSSPEANSIAAEQNRLNLAQEKGVGSREKSGL). The span at 344 to 362 (SRSSSPEANSIAAEQNRLN) shows a compositional bias: polar residues.

The protein belongs to the connexin family. Gamma-type subfamily. In terms of assembly, a connexon is composed of a hexamer of connexins.

It is found in the cell membrane. The protein localises to the cell junction. The protein resides in the gap junction. Its function is as follows. One gap junction consists of a cluster of closely packed pairs of transmembrane channels, the connexons, through which materials of low MW diffuse from one cell to a neighboring cell. In Xenopus laevis (African clawed frog), this protein is Gap junction gamma-1 protein (gjc1).